We begin with the raw amino-acid sequence, 434 residues long: Histidinol dehydrogenase (434 aa).

NAD(+) is bound by residues Tyr130, Gln188, and Asn211. Substrate is bound by residues Ser237, Gln259, and His262. Zn(2+) is bound by residues Gln259 and His262. Catalysis depends on proton acceptor residues Glu326 and His327. Residues His327, Asp360, Glu414, and His419 each contribute to the substrate site. Asp360 lines the Zn(2+) pocket. His419 is a Zn(2+) binding site.

This sequence belongs to the histidinol dehydrogenase family. In terms of assembly, homodimer. Zn(2+) serves as cofactor.

It carries out the reaction L-histidinol + 2 NAD(+) + H2O = L-histidine + 2 NADH + 3 H(+). The protein operates within amino-acid biosynthesis; L-histidine biosynthesis; L-histidine from 5-phospho-alpha-D-ribose 1-diphosphate: step 9/9. Its function is as follows. Catalyzes the sequential NAD-dependent oxidations of L-histidinol to L-histidinaldehyde and then to L-histidine. This is Histidinol dehydrogenase from Escherichia coli O157:H7.